The chain runs to 393 residues: Acetylornithine aminotransferase 1 (393 aa).

A N(2)-acetyl-L-ornithine-binding site is contributed by Arg-131. 215–218 (DEVQ) provides a ligand contact to pyridoxal 5'-phosphate. Lys-244 bears the N6-(pyridoxal phosphate)lysine mark. Thr-272 contributes to the N(2)-acetyl-L-ornithine binding site. Thr-273 contacts pyridoxal 5'-phosphate.

Belongs to the class-III pyridoxal-phosphate-dependent aminotransferase family. ArgD subfamily. In terms of assembly, homodimer. Requires pyridoxal 5'-phosphate as cofactor.

It is found in the cytoplasm. It catalyses the reaction N(2)-acetyl-L-ornithine + 2-oxoglutarate = N-acetyl-L-glutamate 5-semialdehyde + L-glutamate. It functions in the pathway amino-acid biosynthesis; L-arginine biosynthesis; N(2)-acetyl-L-ornithine from L-glutamate: step 4/4. This chain is Acetylornithine aminotransferase 1, found in Bordetella parapertussis (strain 12822 / ATCC BAA-587 / NCTC 13253).